Consider the following 1569-residue polypeptide: Pentafunctional AROM polypeptide (1569 aa).

The segment at Met-1–Asp-382 is 3-dehydroquinate synthase. Residues Asp-49 to Asn-51, Glu-84 to Lys-87, Gly-115 to Val-117, and Asp-120 each bind NAD(+). A 7-phospho-2-dehydro-3-deoxy-D-arabino-heptonate-binding site is contributed by Arg-131. Thr-140 to Thr-141 contributes to the NAD(+) binding site. 2 residues coordinate 7-phospho-2-dehydro-3-deoxy-D-arabino-heptonate: Asp-147 and Lys-153. Residue Lys-162 coordinates NAD(+). Asn-163 is a 7-phospho-2-dehydro-3-deoxy-D-arabino-heptonate binding site. Residues Phe-180 to Thr-183 and Asn-191 contribute to the NAD(+) site. Glu-195 is a binding site for Zn(2+). 7-phospho-2-dehydro-3-deoxy-D-arabino-heptonate contacts are provided by residues Glu-195 to Lys-198 and Lys-248. The Proton acceptor; for 3-dehydroquinate synthase activity role is filled by Glu-258. Residues Arg-262–Asn-266 and His-269 each bind 7-phospho-2-dehydro-3-deoxy-D-arabino-heptonate. His-269 is a Zn(2+) binding site. His-273 functions as the Proton acceptor; for 3-dehydroquinate synthase activity in the catalytic mechanism. 7-phospho-2-dehydro-3-deoxy-D-arabino-heptonate is bound by residues His-285 and Lys-354. His-285 contacts Zn(2+). Residues Val-395–Val-837 form an EPSP synthase region. The active-site For EPSP synthase activity is Cys-819. Residues Glu-859–Ser-1053 are shikimate kinase. Gly-866–Thr-873 contacts ATP. The segment at Leu-1054–Glu-1267 is 3-dehydroquinase. Catalysis depends on His-1170, which acts as the Proton acceptor; for 3-dehydroquinate dehydratase activity. Lys-1198 (schiff-base intermediate with substrate; for 3-dehydroquinate dehydratase activity) is an active-site residue. The interval Pro-1280 to Leu-1569 is shikimate dehydrogenase.

The protein in the N-terminal section; belongs to the sugar phosphate cyclases superfamily. Dehydroquinate synthase family. In the 2nd section; belongs to the EPSP synthase family. This sequence in the 3rd section; belongs to the shikimate kinase family. It in the 4th section; belongs to the type-I 3-dehydroquinase family. The protein in the C-terminal section; belongs to the shikimate dehydrogenase family. Homodimer. Zn(2+) serves as cofactor.

Its subcellular location is the cytoplasm. The enzyme catalyses 7-phospho-2-dehydro-3-deoxy-D-arabino-heptonate = 3-dehydroquinate + phosphate. It carries out the reaction 3-dehydroquinate = 3-dehydroshikimate + H2O. It catalyses the reaction shikimate + NADP(+) = 3-dehydroshikimate + NADPH + H(+). The catalysed reaction is shikimate + ATP = 3-phosphoshikimate + ADP + H(+). The enzyme catalyses 3-phosphoshikimate + phosphoenolpyruvate = 5-O-(1-carboxyvinyl)-3-phosphoshikimate + phosphate. The protein operates within metabolic intermediate biosynthesis; chorismate biosynthesis; chorismate from D-erythrose 4-phosphate and phosphoenolpyruvate: step 2/7. It functions in the pathway metabolic intermediate biosynthesis; chorismate biosynthesis; chorismate from D-erythrose 4-phosphate and phosphoenolpyruvate: step 3/7. It participates in metabolic intermediate biosynthesis; chorismate biosynthesis; chorismate from D-erythrose 4-phosphate and phosphoenolpyruvate: step 4/7. Its pathway is metabolic intermediate biosynthesis; chorismate biosynthesis; chorismate from D-erythrose 4-phosphate and phosphoenolpyruvate: step 5/7. The protein operates within metabolic intermediate biosynthesis; chorismate biosynthesis; chorismate from D-erythrose 4-phosphate and phosphoenolpyruvate: step 6/7. The AROM polypeptide catalyzes 5 consecutive enzymatic reactions in prechorismate polyaromatic amino acid biosynthesis. This is Pentafunctional AROM polypeptide from Fusarium vanettenii (strain ATCC MYA-4622 / CBS 123669 / FGSC 9596 / NRRL 45880 / 77-13-4) (Fusarium solani subsp. pisi).